Here is a 437-residue protein sequence, read N- to C-terminus: Glycogen synthase (437 aa).

Lys-15 provides a ligand contact to ADP-alpha-D-glucose.

Belongs to the glycosyltransferase 1 family. Bacterial/plant glycogen synthase subfamily.

It carries out the reaction [(1-&gt;4)-alpha-D-glucosyl](n) + ADP-alpha-D-glucose = [(1-&gt;4)-alpha-D-glucosyl](n+1) + ADP + H(+). It functions in the pathway glycan biosynthesis; glycogen biosynthesis. Its function is as follows. Synthesizes alpha-1,4-glucan chains using ADP-glucose. This chain is Glycogen synthase, found in Thermus thermophilus (strain ATCC BAA-163 / DSM 7039 / HB27).